The following is a 443-amino-acid chain: MNNEIVNSTIDGVLNTKLHIQNIPPHITDVHLRSLLGNVGFIKDICYFNKSKKQMNNNNFANKKIYNTALVTFNTHEEALNVLKNIKNLIDTSGEERNIDAKFAVPNVSINNNNNNNNSNTFFQKNNMNNTNFSQGSTNYGSNYNSENFQGNNNMNNYNFYNNNSSNNNNNNQTNTQNNFMNRNMKNKNMNNNNNNNNSNNNMMMNMNFNNNQQMNNNPMLNQNNFMLNNNNNYNNNAKNVNDMYRDGEMSPNHLNNNNNNINNNNNNNNNNNNNNNVMFRQNNSHLAQMYQANDNSLEDVENVDGLSLWEMYKDKNNNIFYYNNLTKHANGINLFTQTNYSSITIMKKQNKMDLVEVTYLFSTYLVNGQTLIYSNISVVLVILYHQKFKETVLGRNSGFGFVSYDNVISAQHAIQFMNGYFVNNKYLKVQLKKGETVENTNS.

The region spanning 16–106 (TKLHIQNIPP…RNIDAKFAVP (91 aa)) is the RRM 1 domain. A disordered region spans residues 253-279 (NHLNNNNNNINNNNNNNNNNNNNNNVM). The span at 256 to 277 (NNNNNNINNNNNNNNNNNNNNN) shows a compositional bias: low complexity. The 94-residue stretch at 342-435 (SSITIMKKQN…KYLKVQLKKG (94 aa)) folds into the RRM 2 domain.

This Plasmodium falciparum protein is Clustered-asparagine-rich protein.